Reading from the N-terminus, the 405-residue chain is Argininosuccinate synthase (405 aa).

Residues 10-18 and Ala37 contribute to the ATP site; that span reads AFSGGLDTS. Positions 90 and 95 each coordinate L-citrulline. Gly120 is an ATP binding site. Positions 122, 126, and 127 each coordinate L-aspartate. Asn126 contacts L-citrulline. Arg130, Ser181, Ser190, Glu266, and Tyr278 together coordinate L-citrulline.

This sequence belongs to the argininosuccinate synthase family. Type 1 subfamily. As to quaternary structure, homotetramer.

It is found in the cytoplasm. It carries out the reaction L-citrulline + L-aspartate + ATP = 2-(N(omega)-L-arginino)succinate + AMP + diphosphate + H(+). The protein operates within amino-acid biosynthesis; L-arginine biosynthesis; L-arginine from L-ornithine and carbamoyl phosphate: step 2/3. The chain is Argininosuccinate synthase from Rhizorhabdus wittichii (strain DSM 6014 / CCUG 31198 / JCM 15750 / NBRC 105917 / EY 4224 / RW1) (Sphingomonas wittichii).